The primary structure comprises 153 residues: Small ribosomal subunit protein bS16 (153 aa).

The segment at E130–A153 is disordered. A compositionally biased stretch (acidic residues) spans A140–A153.

The protein belongs to the bacterial ribosomal protein bS16 family.

This is Small ribosomal subunit protein bS16 from Bifidobacterium longum (strain NCC 2705).